A 558-amino-acid chain; its full sequence is Formate--tetrahydrofolate ligase (558 aa).

An ATP-binding site is contributed by 66 to 73; that stretch reads TPAGEGKT.

Belongs to the formate--tetrahydrofolate ligase family.

The enzyme catalyses (6S)-5,6,7,8-tetrahydrofolate + formate + ATP = (6R)-10-formyltetrahydrofolate + ADP + phosphate. The protein operates within one-carbon metabolism; tetrahydrofolate interconversion. This is Formate--tetrahydrofolate ligase from Neisseria meningitidis serogroup A / serotype 4A (strain DSM 15465 / Z2491).